A 145-amino-acid polypeptide reads, in one-letter code: Large ribosomal subunit protein uL16 (145 aa).

A compositionally biased stretch (basic residues) spans 1-21 (MLVPTRVKHRKQHRGRMHGKA). The segment at 1 to 22 (MLVPTRVKHRKQHRGRMHGKAT) is disordered.

The protein belongs to the universal ribosomal protein uL16 family. As to quaternary structure, part of the 50S ribosomal subunit.

Functionally, binds 23S rRNA and is also seen to make contacts with the A and possibly P site tRNAs. The chain is Large ribosomal subunit protein uL16 from Desulfitobacterium hafniense (strain Y51).